Here is a 52-residue protein sequence, read N- to C-terminus: Gastrin/cholecystokinin-like peptide (52 aa).

Belongs to the gastrin/cholecystokinin family.

The protein localises to the secreted. May control digestion processes. The protein is Gastrin/cholecystokinin-like peptide of Trachemys scripta (Red-eared slider turtle).